A 146-amino-acid polypeptide reads, in one-letter code: COP9 signalosome complex subunit 9 (146 aa).

The region spanning 1 to 107 (MDSYKTQWLT…SVAREVKVLQ (107 aa)) is the PCI domain.

As to quaternary structure, component of a COP9 signalosome-like (CSN) complex.

It is found in the cytoplasm. The protein resides in the nucleus. Its function is as follows. Component of the COP9 signalosome (CSN) complex that acts as a regulator of the ubiquitin (Ubl) conjugation pathway by mediating the deneddylation of the cullin subunit of SCF-type E3 ubiquitin-protein ligase complexes. The CSN complex is involved in the regulation of the mating pheromone response. The protein is COP9 signalosome complex subunit 9 (CSN9) of Candida glabrata (strain ATCC 2001 / BCRC 20586 / JCM 3761 / NBRC 0622 / NRRL Y-65 / CBS 138) (Yeast).